Here is a 196-residue protein sequence, read N- to C-terminus: Alpha-crystallin A chain (196 aa).

M1 is modified (N-acetylmethionine). The required for complex formation with BFSP1 and BFSP2 stretch occupies residues 1 to 63; it reads MDVTIQHPWF…RTVLDSCISE (63 aa). Q6 is modified (deamidated glutamine; partial). S45 carries the post-translational modification Phosphoserine. Q50 bears the Deamidated glutamine; partial mark. The sHSP domain maps to 76–185; sequence HAGNPENNPI…GHSERAIPVS (110 aa). Residues K93 and K122 each carry the N6-acetyllysine modification. Position 123 (H123) interacts with Zn(2+). Deamidated asparagine; partial is present on N124. Residues E125 and H130 each contribute to the Zn(2+) site. S145 is subject to Phosphoserine. Deamidated glutamine; partial is present on Q170. Residues 170–196 form a disordered region; sequence QSGLDAGHSERAIPVSQEEKPSSAPLF. Basic and acidic residues predominate over residues 176–190; that stretch reads GHSERAIPVSQEEKP. H177 is a Zn(2+) binding site. O-linked (GlcNAc) serine glycosylation is present at S185.

Belongs to the small heat shock protein (HSP20) family. As to quaternary structure, heteromer composed of three CRYAA and one CRYAB subunits. Inter-subunit bridging via zinc ions enhances stability, which is crucial as there is no protein turn over in the lens. Can also form homodimers and homotetramers (dimers of dimers) which serve as the building blocks of homooligomers. Within homooligomers, the zinc-binding motif is created from residues of 3 different molecules. His-123 and Glu-125 from one molecule are ligands of the zinc ion, and His-130 and His-177 residues from additional molecules complete the site with tetrahedral coordination geometry. Part of a complex required for lens intermediate filament formation composed of BFSP1, BFSP2 and CRYAA. Acetylation at Lys-93 may increase chaperone activity. In terms of processing, undergoes age-dependent proteolytical cleavage at the C-terminus.

The protein resides in the cytoplasm. The protein localises to the nucleus. Contributes to the transparency and refractive index of the lens. Acts as a chaperone, preventing aggregation of various proteins under a wide range of stress conditions. Required for the correct formation of lens intermediate filaments as part of a complex composed of BFSP1, BFSP2 and CRYAA. This is Alpha-crystallin A chain (CRYAA) from Spalax ehrenbergi (Middle East blind mole rat).